The chain runs to 397 residues: Phosphoglycerate kinase (397 aa).

Substrate-binding positions include 21–23 (DMN), Arg36, 59–62 (HLGR), Arg114, and Arg147. ATP is bound by residues Lys198, Glu320, and 346 to 349 (GGDT).

It belongs to the phosphoglycerate kinase family. As to quaternary structure, monomer.

The protein localises to the cytoplasm. The enzyme catalyses (2R)-3-phosphoglycerate + ATP = (2R)-3-phospho-glyceroyl phosphate + ADP. Its pathway is carbohydrate degradation; glycolysis; pyruvate from D-glyceraldehyde 3-phosphate: step 2/5. In Neisseria gonorrhoeae (strain NCCP11945), this protein is Phosphoglycerate kinase.